Reading from the N-terminus, the 172-residue chain is RNA pyrophosphohydrolase (172 aa).

Residues 6–149 (GFRANVGIII…KRDVYRKVMK (144 aa)) enclose the Nudix hydrolase domain. The Nudix box signature appears at 38-59 (GGLDDGESAEEAMYRELYEEVG).

It belongs to the Nudix hydrolase family. RppH subfamily. It depends on a divalent metal cation as a cofactor.

Accelerates the degradation of transcripts by removing pyrophosphate from the 5'-end of triphosphorylated RNA, leading to a more labile monophosphorylated state that can stimulate subsequent ribonuclease cleavage. The sequence is that of RNA pyrophosphohydrolase from Shewanella denitrificans (strain OS217 / ATCC BAA-1090 / DSM 15013).